The chain runs to 527 residues: Bifunctional purine biosynthesis protein PurH (527 aa).

Residues 1–144 enclose the MGS-like domain; the sequence is MNRRALISVS…KNHESVAIIV (144 aa).

Belongs to the PurH family.

The enzyme catalyses (6R)-10-formyltetrahydrofolate + 5-amino-1-(5-phospho-beta-D-ribosyl)imidazole-4-carboxamide = 5-formamido-1-(5-phospho-D-ribosyl)imidazole-4-carboxamide + (6S)-5,6,7,8-tetrahydrofolate. It carries out the reaction IMP + H2O = 5-formamido-1-(5-phospho-D-ribosyl)imidazole-4-carboxamide. It participates in purine metabolism; IMP biosynthesis via de novo pathway; 5-formamido-1-(5-phospho-D-ribosyl)imidazole-4-carboxamide from 5-amino-1-(5-phospho-D-ribosyl)imidazole-4-carboxamide (10-formyl THF route): step 1/1. It functions in the pathway purine metabolism; IMP biosynthesis via de novo pathway; IMP from 5-formamido-1-(5-phospho-D-ribosyl)imidazole-4-carboxamide: step 1/1. This Heliobacterium modesticaldum (strain ATCC 51547 / Ice1) protein is Bifunctional purine biosynthesis protein PurH.